The chain runs to 492 residues: MFQYSLWPLLALSGGTGLAYLVVVVVYNLFFHPLRNFPGPWLNSITQVPHTLLMLCGLPHKKHLALHMKYGPVVRIGPNMLSFNHPDAMKDVRGHRKSGEPEHGKDPISVQSNGDNIVGSDRENHTRFRRALAYGFSAQAMLEQEPTFKAYVNQLFQRLHEQSSGGTKPVDISKWYTFTTFDMIGDLAFGESFSCLDNSTYHPWVSLAFESLKSLAFLAEIGRYPRIAPYLGLLVPRGLLTKFAENKELASMKVRKRLDTETDRPDFVGKITQGLKSKGTSMEFNELASNASVLIVAGSETTATLLSAAVYFLCAHPRTLDLLTKEVRSTYTQAHDIDLVSTQGLRYMQAVLDEALRMYPPVAGGGSPRKIAKGGSFVAGHFVPENTLVENDMWAMHYDPKYFTQPHDFIPERWLGDVRFANDRLDAVKPFSIGPRNCIGMNLAYAEMRMMLARTVWEFDIRLSEGSRNWYEESRVYLAWNKPPLNVYLIPR.

The helical transmembrane segment at 6-26 threads the bilayer; that stretch reads LWPLLALSGGTGLAYLVVVVV. Over residues 88–106 the composition is skewed to basic and acidic residues; it reads AMKDVRGHRKSGEPEHGKD. The segment at 88-116 is disordered; it reads AMKDVRGHRKSGEPEHGKDPISVQSNGDN. 3 N-linked (GlcNAc...) asparagine glycosylation sites follow: Asn124, Asn198, and Asn290. A heme-binding site is contributed by Cys438.

This sequence belongs to the cytochrome P450 family. Heme serves as cofactor.

It localises to the membrane. Its pathway is sesquiterpene biosynthesis; trichothecene biosynthesis. In terms of biological role, trichothecene C-15 hydroxylase; part of the core gene cluster that mediates the biosynthesis of trichothecenes, a very large family of chemically related bicyclic sesquiterpene compounds acting as mycotoxins, including T2-toxin. The biosynthesis of trichothecenes begins with the cyclization of farnesyl diphosphate to trichodiene and is catalyzed by the trichodiene synthase TRI5. Trichodiene undergoes a series of oxygenations catalyzed by the cytochrome P450 monooxygenase TRI4. TRI4 controls the addition of four oxygens at C-2, C-3, C-11, and the C-12, C-13-epoxide to form the intermediate isotrichotriol. Isotrichotriol then undergoes a non-enzymatic isomerization and cyclization to form isotrichodermol. During this process, the oxygen at the C-2 position becomes the pyran ring oxygen and the hydroxyl group at C-11 is lost. More complex type A trichothecenes are built by modifying isotrichodermol through a series of paired hydroxylation and acetylation or acylation steps. Isotrichodermol is converted to isotrichodermin by the acetyltransferase TRI101. TRI101 encodes a C-3 transacetylase that acts as a self-protection or resistance factor during biosynthesis and that the presence of a free C-3 hydroxyl group is a key component of Fusarium trichothecene phytotoxicity. A second hydroxyl group is added to C-15 by the trichothecene C-15 hydroxylase TRI11, producing 15-decalonectrin, which is then acetylated by TRI3, producing calonectrin. A third hydroxyl group is added at C-4 by the cytochrome P450 monooxygenase TRI13, converting calonectrin to 3,15-diacetoxyspirpenol, which is subsequently acetylated by the acetyltransferase TRI7. A fourth hydroxyl group is added to C-8 by the cytochrome P450 monooxygenase TRI1, followed by the addition of an isovaleryl moiety by TRI16. Finally, the acetyl group is removed from the C-3 position by the trichothecene C-3 esterase TRI8 to produce T-2 toxin. The sequence is that of Trichothecene C-15 hydroxylase from Fusarium sporotrichioides.